A 365-amino-acid chain; its full sequence is UDP-N-acetylglucosamine--N-acetylmuramyl-(pentapeptide) pyrophosphoryl-undecaprenol N-acetylglucosamine transferase (365 aa).

UDP-N-acetyl-alpha-D-glucosamine is bound by residues threonine 10–glycine 12, asparagine 124, arginine 165, serine 193, isoleucine 248, and glutamine 293.

This sequence belongs to the glycosyltransferase 28 family. MurG subfamily.

The protein resides in the cell inner membrane. It catalyses the reaction di-trans,octa-cis-undecaprenyl diphospho-N-acetyl-alpha-D-muramoyl-L-alanyl-D-glutamyl-meso-2,6-diaminopimeloyl-D-alanyl-D-alanine + UDP-N-acetyl-alpha-D-glucosamine = di-trans,octa-cis-undecaprenyl diphospho-[N-acetyl-alpha-D-glucosaminyl-(1-&gt;4)]-N-acetyl-alpha-D-muramoyl-L-alanyl-D-glutamyl-meso-2,6-diaminopimeloyl-D-alanyl-D-alanine + UDP + H(+). It functions in the pathway cell wall biogenesis; peptidoglycan biosynthesis. Functionally, cell wall formation. Catalyzes the transfer of a GlcNAc subunit on undecaprenyl-pyrophosphoryl-MurNAc-pentapeptide (lipid intermediate I) to form undecaprenyl-pyrophosphoryl-MurNAc-(pentapeptide)GlcNAc (lipid intermediate II). The sequence is that of UDP-N-acetylglucosamine--N-acetylmuramyl-(pentapeptide) pyrophosphoryl-undecaprenol N-acetylglucosamine transferase from Geotalea uraniireducens (strain Rf4) (Geobacter uraniireducens).